Consider the following 255-residue polypeptide: Putative keratin-87 protein (255 aa).

Positions Met1 to Leu255 constitute an IF rod domain. Coiled-coil stretches lie at residues Leu19–Val81 and Leu147–Ser227.

Belongs to the intermediate filament family. As to quaternary structure, heterotetramer of two type I and two type II keratins.

This Homo sapiens (Human) protein is Putative keratin-87 protein (KRT87P).